We begin with the raw amino-acid sequence, 375 residues long: 23S rRNA (uracil(747)-C(5))-methyltransferase RlmC (375 aa).

Positions 3, 11, 14, and 87 each coordinate [4Fe-4S] cluster. 4 residues coordinate S-adenosyl-L-methionine: glutamine 212, phenylalanine 241, glutamate 262, and asparagine 307. The Nucleophile role is filled by cysteine 334.

The protein belongs to the class I-like SAM-binding methyltransferase superfamily. RNA M5U methyltransferase family. RlmC subfamily.

The catalysed reaction is uridine(747) in 23S rRNA + S-adenosyl-L-methionine = 5-methyluridine(747) in 23S rRNA + S-adenosyl-L-homocysteine + H(+). Its function is as follows. Catalyzes the formation of 5-methyl-uridine at position 747 (m5U747) in 23S rRNA. The sequence is that of 23S rRNA (uracil(747)-C(5))-methyltransferase RlmC from Escherichia coli O157:H7.